The sequence spans 489 residues: 5'-AMP-activated protein kinase subunit gamma-3 (489 aa).

A disordered region spans residues M1–A95. Residues G32–R47 show a composition bias toward polar residues. 3 CBS domains span residues M197–L258, C280–R340, and T355–M415. Residues R225, M240 to D245, V285, H306 to R307, and K325 contribute to the ADP site. AMP contacts are provided by residues R225, M240 to D245, V285, H306, H306 to R307, K325, T355, A360, S381 to A382, S397 to D400, R424, L432, H453, H453 to R454, and S469 to D472. Residues R225, M240–D245, V285, H306–R307, R307, and K325 each bind ATP. An AMPK pseudosubstrate motif is present at residues L293–V314. ADP contacts are provided by residues S397–D400, R424, L432, and H453–R454. Residues S397–D400, R424, L432, and H453–R454 each bind ATP. One can recognise a CBS 4 domain in the interval C427–A486.

It belongs to the 5'-AMP-activated protein kinase gamma subunit family. As to quaternary structure, AMPK is a heterotrimer of an alpha catalytic subunit (PRKAA1 or PRKAA2), a beta (PRKAB1 or PRKAB2) and a gamma non-catalytic subunits (PRKAG1, PRKAG2 or PRKAG3). Interacts with FNIP1 and FNIP2. Post-translationally, phosphorylated by ULK1; leading to negatively regulate AMPK activity and suggesting the existence of a regulatory feedback loop between ULK1 and AMPK. Glycosylated; O-GlcNAcylated by OGT, promoting the AMP-activated protein kinase (AMPK) activity.

Its function is as follows. AMP/ATP-binding subunit of AMP-activated protein kinase (AMPK), an energy sensor protein kinase that plays a key role in regulating cellular energy metabolism. In response to reduction of intracellular ATP levels, AMPK activates energy-producing pathways and inhibits energy-consuming processes: inhibits protein, carbohydrate and lipid biosynthesis, as well as cell growth and proliferation. AMPK acts via direct phosphorylation of metabolic enzymes, and by longer-term effects via phosphorylation of transcription regulators. AMPK also acts as a regulator of cellular polarity by remodeling the actin cytoskeleton; probably by indirectly activating myosin. The AMPK gamma3 subunit is a non-catalytic subunit with a regulatory role in muscle energy metabolism. It mediates binding to AMP, ADP and ATP, leading to AMPK activation or inhibition: AMP-binding results in allosteric activation of alpha catalytic subunit (PRKAA1 or PRKAA2) both by inducing phosphorylation and preventing dephosphorylation of catalytic subunits. ADP also stimulates phosphorylation, without stimulating already phosphorylated catalytic subunit. ATP promotes dephosphorylation of catalytic subunit, rendering the AMPK enzyme inactive. This chain is 5'-AMP-activated protein kinase subunit gamma-3 (Prkag3), found in Mus musculus (Mouse).